The sequence spans 474 residues: Siroheme synthase (474 aa).

A precorrin-2 dehydrogenase /sirohydrochlorin ferrochelatase region spans residues 1–202 (MEYLPIFIDL…GRPKEANKVL (202 aa)). NAD(+) is bound by residues 22–23 (AV) and 41–42 (PA). S126 bears the Phosphoserine mark. Residues 218–474 (GHVTLVGAGP…YLINSIINLI (257 aa)) are uroporphyrinogen-III C-methyltransferase. P227 contributes to the S-adenosyl-L-methionine binding site. Residue D250 is the Proton acceptor of the active site. K272 (proton donor) is an active-site residue. Residues 303 to 305 (GGD), I308, 333 to 334 (TA), M385, and G414 contribute to the S-adenosyl-L-methionine site.

It in the N-terminal section; belongs to the precorrin-2 dehydrogenase / sirohydrochlorin ferrochelatase family. In the C-terminal section; belongs to the precorrin methyltransferase family.

The enzyme catalyses uroporphyrinogen III + 2 S-adenosyl-L-methionine = precorrin-2 + 2 S-adenosyl-L-homocysteine + H(+). It carries out the reaction precorrin-2 + NAD(+) = sirohydrochlorin + NADH + 2 H(+). The catalysed reaction is siroheme + 2 H(+) = sirohydrochlorin + Fe(2+). It participates in cofactor biosynthesis; adenosylcobalamin biosynthesis; precorrin-2 from uroporphyrinogen III: step 1/1. The protein operates within cofactor biosynthesis; adenosylcobalamin biosynthesis; sirohydrochlorin from precorrin-2: step 1/1. Its pathway is porphyrin-containing compound metabolism; siroheme biosynthesis; precorrin-2 from uroporphyrinogen III: step 1/1. It functions in the pathway porphyrin-containing compound metabolism; siroheme biosynthesis; siroheme from sirohydrochlorin: step 1/1. It participates in porphyrin-containing compound metabolism; siroheme biosynthesis; sirohydrochlorin from precorrin-2: step 1/1. Functionally, multifunctional enzyme that catalyzes the SAM-dependent methylations of uroporphyrinogen III at position C-2 and C-7 to form precorrin-2 via precorrin-1. Then it catalyzes the NAD-dependent ring dehydrogenation of precorrin-2 to yield sirohydrochlorin. Finally, it catalyzes the ferrochelation of sirohydrochlorin to yield siroheme. The protein is Siroheme synthase of Blochmanniella pennsylvanica (strain BPEN).